Reading from the N-terminus, the 169-residue chain is Chorion protein E1 (169 aa).

The signal sequence occupies residues 1 to 19 (MAWFTTVLIVASLLGSLVA). Tetradecapeptide repeat units follow at residues 114–127 (GAGRGAEMEGKPRS) and 128–141 (GAGKGAEMEGKPKS). The segment at 119-169 (AEMEGKPRSGAGKGAEMEGKPKSTESVAETNTVAAGTGVVAEKTGTESSAS) is disordered. Over residues 142 to 152 (TESVAETNTVA) the composition is skewed to polar residues.

Its function is as follows. This protein is one of two components of the prominent 'filler' that helps mold the shape of aeropyle crowns. This is Chorion protein E1 from Antheraea polyphemus (Polyphemus moth).